A 435-amino-acid polypeptide reads, in one-letter code: ATP-dependent protease ATPase subunit HslU (435 aa).

ATP contacts are provided by residues Val-18, 60 to 65 (GVGKTE), Asp-248, Glu-313, and Arg-385.

This sequence belongs to the ClpX chaperone family. HslU subfamily. A double ring-shaped homohexamer of HslV is capped on each side by a ring-shaped HslU homohexamer. The assembly of the HslU/HslV complex is dependent on binding of ATP.

The protein resides in the cytoplasm. In terms of biological role, ATPase subunit of a proteasome-like degradation complex; this subunit has chaperone activity. The binding of ATP and its subsequent hydrolysis by HslU are essential for unfolding of protein substrates subsequently hydrolyzed by HslV. HslU recognizes the N-terminal part of its protein substrates and unfolds these before they are guided to HslV for hydrolysis. The chain is ATP-dependent protease ATPase subunit HslU from Xanthobacter autotrophicus (strain ATCC BAA-1158 / Py2).